We begin with the raw amino-acid sequence, 328 residues long: Malate dehydrogenase (328 aa).

13–19 (GGTGQIA) is an NAD(+) binding site. Substrate is bound by residues arginine 94 and arginine 100. Residues asparagine 107, glutamine 114, and 131–133 (VGN) each bind NAD(+). The substrate site is built by asparagine 133 and arginine 164. Histidine 189 (proton acceptor) is an active-site residue.

The protein belongs to the LDH/MDH superfamily. MDH type 2 family.

The catalysed reaction is (S)-malate + NAD(+) = oxaloacetate + NADH + H(+). In terms of biological role, catalyzes the reversible oxidation of malate to oxaloacetate. This is Malate dehydrogenase from Chlamydia felis (strain Fe/C-56) (Chlamydophila felis).